Reading from the N-terminus, the 201-residue chain is Recombination protein RecR (201 aa).

The segment at 59-74 (CEICGNMDTENICCIC) adopts a C4-type zinc-finger fold. The region spanning 82–177 (SVIAVVETVA…KISRLASGIP (96 aa)) is the Toprim domain.

Belongs to the RecR family.

In terms of biological role, may play a role in DNA repair. It seems to be involved in an RecBC-independent recombinational process of DNA repair. It may act with RecF and RecO. The polypeptide is Recombination protein RecR (Rickettsia felis (strain ATCC VR-1525 / URRWXCal2) (Rickettsia azadi)).